The sequence spans 551 residues: MDAAATAATATAAAAMVWFRKGLRVHDNPALDAARRGGAAARLYPVFVLDPRYLRPDQAAPSPGSARAGVARVRFLLESLSDLDARLRRLGSRLLLLRARDDGDVAGTVCAALKDWNIGKLCFESDTEPYALARDKKVMDFAAASGIDVFSPVSHTLFDPAEIIEKNGGRPPMTYQSFVAIAGEPPEPIMEEYSELPPVGDTGEYELLPVPRVEELGYGDISQEDLSLFRGGETEALKRMRESLHDKEWVAKFEKPKGDPSAFLKPATTVLSPYLKFGCLSSRYFYHCIQDIYRSTKKHTNPPVSLTGQLLWRDFFYTVAFGTPNFDQMKGNKICKQIPWTENEELFPAWRDGRTGYPWIDAIMIQLRKWGWMHHLARHSVACFLTRGDLFIHWEKGRDVFERLLIDSDWAINNGNWMWLSCSSFFYQYHRIYSPTSFGKKYDPNGNYIRHFIPVLKDMPKEYIYEPWTAPLSIQKKANCIIGKDYPKPVVDHAIASKECKKMMGEAYASNRLDDDKPDKGKSSNSSRRKLSAGSQVTPNSSKTKQLKRSS.

The 145-residue stretch at alanine 13–leucine 157 folds into the Photolyase/cryptochrome alpha/beta domain. Residue glutamate 254 coordinates phosphate. FAD-binding positions include lysine 255, threonine 268–serine 272, glutamine 309–arginine 313, tryptophan 372–histidine 375, arginine 378, aspartate 407–aspartate 409, and asparagine 413. Tryptophan 312 serves as a coordination point for DNA. The tract at residues histidine 374 to histidine 379 is interaction with DNA. DNA is bound at residue tryptophan 419. The segment at tyrosine 508 to serine 551 is disordered. Over residues arginine 512 to lysine 522 the composition is skewed to basic and acidic residues. Over residues alanine 533 to threonine 544 the composition is skewed to polar residues.

It belongs to the DNA photolyase class-1 family. FAD serves as cofactor.

The catalysed reaction is (6-4) photoproduct (in DNA) = 2 pyrimidine residues (in DNA).. Its function is as follows. Involved in repair of UV radiation-induced DNA damage. Catalyzes the photoreactivation of pyrimidine [6-4] pyrimidone photoproduct (6-4 products). The protein is (6-4)DNA photolyase (UVR3) of Oryza sativa subsp. japonica (Rice).